We begin with the raw amino-acid sequence, 292 residues long: Glutamate racemase (292 aa).

Residues 28–29 (DS) and 60–61 (YG) contribute to the substrate site. The active-site Proton donor/acceptor is cysteine 91. 92 to 93 (NT) serves as a coordination point for substrate. Cysteine 200 (proton donor/acceptor) is an active-site residue. A substrate-binding site is contributed by 201-202 (TH).

The protein belongs to the aspartate/glutamate racemases family.

The catalysed reaction is L-glutamate = D-glutamate. It participates in cell wall biogenesis; peptidoglycan biosynthesis. Functionally, provides the (R)-glutamate required for cell wall biosynthesis. This is Glutamate racemase from Trichormus variabilis (strain ATCC 29413 / PCC 7937) (Anabaena variabilis).